Here is a 219-residue protein sequence, read N- to C-terminus: Cytidylate kinase (219 aa).

ATP is bound at residue 15–23 (GPAASGKGT).

The protein belongs to the cytidylate kinase family. Type 1 subfamily.

Its subcellular location is the cytoplasm. It carries out the reaction CMP + ATP = CDP + ADP. The catalysed reaction is dCMP + ATP = dCDP + ADP. The sequence is that of Cytidylate kinase from Brucella abortus (strain S19).